The sequence spans 505 residues: Histidine ammonia-lyase (505 aa).

Positions 141–143 form a cross-link, 5-imidazolinone (Ala-Gly); the sequence is ASG. Serine 142 carries the 2,3-didehydroalanine (Ser) modification.

Belongs to the PAL/histidase family. In terms of processing, contains an active site 4-methylidene-imidazol-5-one (MIO), which is formed autocatalytically by cyclization and dehydration of residues Ala-Ser-Gly.

The protein resides in the cytoplasm. It catalyses the reaction L-histidine = trans-urocanate + NH4(+). The protein operates within amino-acid degradation; L-histidine degradation into L-glutamate; N-formimidoyl-L-glutamate from L-histidine: step 1/3. This chain is Histidine ammonia-lyase, found in Bacillus cereus (strain G9842).